Consider the following 91-residue polypeptide: uncharacterized protein (91 aa).

A run of 3 helical transmembrane segments spans residues 9-29 (VLWG…PFLP), 44-64 (LTVN…VFAW), and 71-91 (QFVF…CLAL).

The protein localises to the cell membrane. This is an uncharacterized protein from Bacillus subtilis (strain 168).